Reading from the N-terminus, the 552-residue chain is MRLIVLSLLFTSTLAWFYGRDEPDRWSVGGVWPLPQKIIYGSKNRTLTYDKIGIDLGDKKDCDVLLAMADNYMNKWLFPYPVEMKTGGTEDFIITVTVKEECPGGPPVHGASEEYLLRVSVSEAVINAQTVWGALRAMETLSHLVFYDQKSQEYQIRTAEIFDKPRFPVRGIMIDSSRHFLSLNVIKRQLEIMSMNKLNVLHWHLVDSESFPYTSQKFPELHGVGAYSPRHVYSREDISEVIAFARLRGIRVIPEFDLPGHTSSWKGRKGFLTECFDEKGEETFLPNLVDPMNDANFDFLAEFLEEVTETFPDQFLHLGGDEVSDYIVECWVRNKKIRKFMDEKGFGNNTVLLENYFFEKLFSIVEKLKLKRKPIFWQEVFDNNIPDPNSIIHIWKGNTHEEIYEQVKNITSKNFPVIVSACWYLNYIKYGADWRDEIRGTAPSNSRYYYCDPTSFNGTDTQKNLVLGGIAAIWGELVDNTNIEARLWPRASAAAERLWSPAEKTQKAENAWPRMHELRCRLVSRGYRIQPNNNPDYCPFEFDEPPATKSEL.

The N-terminal stretch at Met-1–Ala-15 is a signal peptide. Asn-44 carries an N-linked (GlcNAc...) asparagine glycan. Catalysis depends on Glu-322, which acts as the Proton donor. Residues Asn-348, Asn-409, and Asn-457 are each glycosylated (N-linked (GlcNAc...) asparagine).

This sequence belongs to the glycosyl hydrolase 20 family.

It localises to the lysosome. The catalysed reaction is Hydrolysis of terminal non-reducing N-acetyl-D-hexosamine residues in N-acetyl-beta-D-hexosaminides.. In terms of biological role, responsible for the degradation of GM2 gangliosides, and a variety of other molecules containing terminal N-acetyl hexosamines. Degrades chitotriose. This Caenorhabditis briggsae protein is Beta-hexosaminidase A.